The chain runs to 230 residues: Response regulator MprA (230 aa).

The 115-residue stretch at 4–118 (RILVVDDDRA…ELLARMRALL (115 aa)) folds into the Response regulatory domain. Asp48 carries the 4-aspartylphosphate modification. The segment at residues 129 to 227 (SMAMRFSDLT…VRGVGYVLRE (99 aa)) is a DNA-binding region (ompR/PhoB-type).

As to quaternary structure, monomer. Interaction with each conserved 8-bp repeat requires tandem binding by two protein monomers. In terms of processing, phosphorylated and dephosphorylated by MprB.

Its subcellular location is the cytoplasm. In terms of biological role, member of the two-component regulatory system MprB/MprA which contributes to maintaining a balance among several systems involved in stress resistance and is required for establishment and maintenance of persistent infection in the host. Functions as a transcriptional regulator that recognizes a 19-bp nucleotide motif comprizing two loosely conserved 8-bp direct DNA-binding motif repeats separated by a 3-bp spacer region. MprB/MprA up-regulates expression of mprA and pepD. The protein is Response regulator MprA (mprA) of Mycobacterium bovis (strain ATCC BAA-935 / AF2122/97).